The primary structure comprises 107 residues: Large ribosomal subunit protein uL24 (107 aa).

Belongs to the universal ribosomal protein uL24 family. As to quaternary structure, part of the 50S ribosomal subunit.

Functionally, one of two assembly initiator proteins, it binds directly to the 5'-end of the 23S rRNA, where it nucleates assembly of the 50S subunit. One of the proteins that surrounds the polypeptide exit tunnel on the outside of the subunit. The protein is Large ribosomal subunit protein uL24 of Streptomyces griseus subsp. griseus (strain JCM 4626 / CBS 651.72 / NBRC 13350 / KCC S-0626 / ISP 5235).